The sequence spans 413 residues: MKKSLLAVAVAGAVLLSSAVQAQTTPEGYQLQQVLMMSRHNLRAPLANNGSVLAQSTPNAWPAWDVPGGQLTTKGGVLEVYMGHYTREWLVAQGLIPSGECPAPDTVYAYANSLQRTVATAQFFITGAFPGCDIPVHHQEKMGTMDPTFNPVITDDSAAFRQQAVQAMEKARSQLHLDESYKLLEQITHYQDSPSCKEKHQCSLIDAKDTFSANYQQEPGVQGPLKVGNSLVDAFTLQYYEGFPMDQVAWGGIHTDRQWKVLSKLKNGYQDSLFTSPTVARNVAAPLVKYIDKVLVADRVSAPKVTVLVGHDSNIASLLTALDFKPYQLHDQYERTPIGGQLVFQRWHDGNANRDLMKIEYVYQSARQLRNAEALTLKSPAQRVTLELKGCPVDANGFCPLDKFDNVMNTAAK.

The first 22 residues, 1–22 (MKKSLLAVAVAGAVLLSSAVQA), serve as a signal peptide directing secretion. R39 lines the substrate pocket. Residue H40 is the Nucleophile of the active site. Positions 43, 116, and 218 each coordinate substrate. D312 functions as the Proton donor in the catalytic mechanism.

Belongs to the histidine acid phosphatase family. As to quaternary structure, homodimer.

It localises to the periplasm. The catalysed reaction is alpha-D-glucose 1-phosphate + H2O = D-glucose + phosphate. This chain is Glucose-1-phosphatase (agp), found in Salmonella typhimurium (strain LT2 / SGSC1412 / ATCC 700720).